Reading from the N-terminus, the 890-residue chain is MIAKAVAALLLGSGLASAAGTPLTSKAGDKVPIPDWDLKSSSEVSKDLKGLSKPGVDTSAWYHAGTSKCTLMACLLNAGIYKDEDLWYSDNLNHFNWGQFSIPWLYRHEFALAPAKGKHFILQTNGITSKADLFFNGQQIADSEYQAGAYAGRTYDITSLAAKDNAFVVQVHPTDYLYDFALGYVDWNPYPPDNGTGIWRDITVKETGSVSMGPISVVVDIDVPVESSPAKVTIRAEAQNLENVAVVLDAEAVVSGNSCSGGPLKQTVKLAPGEKKLVEFTKTIAKPKIWWPKQWGDQPLYNAKVTFSVNKAVSDTAQTNFGVRKVTSFVNQYNDTQYSVNGHPFQVVGGGYGADMFLRWDGDRFTRIVEYMLDMHQNTIRLEGKMEHPELYEICDKYGLMVMPGWECCDKWEAWAYNDELAIFPPPVWDDNDYQTANYSMIHEASMLQPHPSVLTFLVGSDFWPNDEAVVLYVNALKNAGWQTPIIASASKRGFPALLGPGGMKMDGPYDWVPPNYWYDTEPSEDRLGAAFGFGSELGAGVGTPELGSLKRFLSQSDLNDLWKNPNKNLYHMSTNVSSFYNRKIYNQGLFKRYGAPTSLDDYLLKAQMMDYEATRAQYEGFSSLWTASRPATGNIYWMLNNAWPSLHWNQFGYYMHPAGSYFGTKVGSRIEHVAYNYQKKEVWVINHSLDQTGPRKVDIELIDTNGKQIAKQSVNINTKANSGFKAADISSQIGKLSSVAFLRLILSDSKGNVLSRNVYWVTNSIDKLDWDSSTWYYTQVTSFVDYTPLNKLSAAQISVTTGSSRRVAGVPGTQTRTVTLENKPSVPAVFIRLTLVDKSGNDVNPVSWTDNYVTLWPKEKLQLEVGGWDASGDSIQVSGRNIAATTVKL.

A signal peptide spans 1-18 (MIAKAVAALLLGSGLASA). A propeptide spanning residues 19 to 26 (AGTPLTSK) is cleaved from the precursor. Residues N194, N334, and N438 are each glycosylated (N-linked (GlcNAc...) asparagine). Catalysis depends on D462, which acts as the Proton donor. E537 serves as the catalytic Nucleophile. Residues N576 and N687 are each glycosylated (N-linked (GlcNAc...) asparagine).

It belongs to the glycosyl hydrolase 2 family. In terms of assembly, monomer.

The protein localises to the secreted. The protein resides in the extracellular space. It catalyses the reaction Hydrolysis of chitosan or chitosan oligosaccharides to remove successive D-glucosamine residues from the non-reducing termini.. Hydrolyzes chitosan and chitooligosaccharides with retention of anomeric configuration. Has no activity against beta-D-galactoside, beta-D-glucuronide, beta-D-mannoside, chitin, glycol chitosan, cellulose, N,N'-diacetylchitibiose and pNP-GlcNAc. The sequence is that of Exo-beta-D-glucosaminidase from Hypocrea virens (Gliocladium virens).